The chain runs to 417 residues: Carboxypeptidase B (417 aa).

Positions 1–15 (MLALLVLVTVALASA) are cleaved as a signal peptide. The propeptide at 16-110 (HHGGEHFEGE…VEAQFDSRVR (95 aa)) is activation peptide. The 295-residue stretch at 118 to 412 (KYNKWETIEA…LAIKYVASYV (295 aa)) folds into the Peptidase M14 domain. An intrachain disulfide couples C173 to C186. H176 and E179 together coordinate Zn(2+). Residues 176–179 (HARE), R234, and 251–252 (NR) each bind substrate. 2 disulfide bridges follow: C245–C268 and C259–C273. A Zn(2+)-binding site is contributed by H304. Residues 305 to 306 (SY) and Y356 contribute to the substrate site. The active-site Proton donor/acceptor is the E378.

Belongs to the peptidase M14 family. Requires Zn(2+) as cofactor. Pancreas.

The protein resides in the secreted. It is found in the zymogen granule lumen. It carries out the reaction Preferential release of a C-terminal lysine or arginine amino acid.. The sequence is that of Carboxypeptidase B (CPB1) from Homo sapiens (Human).